We begin with the raw amino-acid sequence, 134 residues long: Probable glycine cleavage system H protein (134 aa).

The region spanning Thr29 to Lys110 is the Lipoyl-binding domain. Position 70 is an N6-lipoyllysine (Lys70).

The protein belongs to the GcvH family. As to quaternary structure, the glycine cleavage system is composed of four proteins: P, T, L and H. (R)-lipoate serves as cofactor.

In terms of biological role, the glycine cleavage system catalyzes the degradation of glycine. The H protein shuttles the methylamine group of glycine from the P protein to the T protein. The polypeptide is Probable glycine cleavage system H protein (Thermococcus kodakarensis (strain ATCC BAA-918 / JCM 12380 / KOD1) (Pyrococcus kodakaraensis (strain KOD1))).